A 336-amino-acid chain; its full sequence is tRNA pseudouridine synthase D (336 aa).

The active-site Nucleophile is D84. In terms of domain architecture, TRUD spans G164–D298.

Belongs to the pseudouridine synthase TruD family.

It catalyses the reaction uridine(13) in tRNA = pseudouridine(13) in tRNA. Functionally, responsible for synthesis of pseudouridine from uracil-13 in transfer RNAs. This chain is tRNA pseudouridine synthase D, found in Cellvibrio japonicus (strain Ueda107) (Pseudomonas fluorescens subsp. cellulosa).